A 342-amino-acid polypeptide reads, in one-letter code: tRNA N6-adenosine threonylcarbamoyltransferase (342 aa).

2 residues coordinate Fe cation: histidine 111 and histidine 115. Substrate is bound by residues 134–138, aspartate 167, glycine 180, and asparagine 274; that span reads LVSGG. A Fe cation-binding site is contributed by aspartate 302.

Belongs to the KAE1 / TsaD family. Fe(2+) is required as a cofactor.

The protein resides in the cytoplasm. The enzyme catalyses L-threonylcarbamoyladenylate + adenosine(37) in tRNA = N(6)-L-threonylcarbamoyladenosine(37) in tRNA + AMP + H(+). In terms of biological role, required for the formation of a threonylcarbamoyl group on adenosine at position 37 (t(6)A37) in tRNAs that read codons beginning with adenine. Is involved in the transfer of the threonylcarbamoyl moiety of threonylcarbamoyl-AMP (TC-AMP) to the N6 group of A37, together with TsaE and TsaB. TsaD likely plays a direct catalytic role in this reaction. The polypeptide is tRNA N6-adenosine threonylcarbamoyltransferase (Herminiimonas arsenicoxydans).